Reading from the N-terminus, the 405-residue chain is Endo-1,4-beta-xylanase 5 (405 aa).

An N-terminal signal peptide occupies residues 1-22 (MTRLATLITLAGLLAVSPGAYA). Asn-27 and Asn-69 each carry an N-linked (GlcNAc...) asparagine glycan. A GH10 domain is found at 32 to 352 (STGAEGLNSL…KPAYTSVSSL (321 aa)). The Proton donor role is filled by Glu-166. A glycan (N-linked (GlcNAc...) asparagine) is linked at Asn-171. Catalysis depends on Glu-273, which acts as the Nucleophile. A disulfide bridge links Cys-302 with Cys-308. Residue Gly-380 is the site of GPI-anchor amidated glycine attachment. Residues 381 to 405 (AGRETVSIAGLTLALSSLAFGMFML) constitute a propeptide, removed in mature form.

This sequence belongs to the glycosyl hydrolase 10 (cellulase F) family.

The protein resides in the cell membrane. It localises to the secreted. It carries out the reaction Endohydrolysis of (1-&gt;4)-beta-D-xylosidic linkages in xylans.. It participates in glycan degradation; xylan degradation. Functionally, endo-1,4-beta-xylanase involved in the hydrolysis of xylan, a major structural heterogeneous polysaccharide found in plant biomass representing the second most abundant polysaccharide in the biosphere, after cellulose. This is Endo-1,4-beta-xylanase 5 (XYL5) from Pyricularia grisea (Crabgrass-specific blast fungus).